The chain runs to 278 residues: Probable 3-hydroxybutyryl-CoA dehydrogenase (278 aa).

The protein belongs to the 3-hydroxyacyl-CoA dehydrogenase family.

It carries out the reaction (3S)-3-hydroxybutanoyl-CoA + NADP(+) = acetoacetyl-CoA + NADPH + H(+). It functions in the pathway lipid metabolism; butanoate metabolism. The sequence is that of Probable 3-hydroxybutyryl-CoA dehydrogenase (hbd) from Deinococcus radiodurans (strain ATCC 13939 / DSM 20539 / JCM 16871 / CCUG 27074 / LMG 4051 / NBRC 15346 / NCIMB 9279 / VKM B-1422 / R1).